The following is a 404-amino-acid chain: Cysteine desulfurase IscS (404 aa).

Pyridoxal 5'-phosphate is bound by residues 75 to 76 (AT), Asn155, Gln183, and 203 to 205 (SAH). Lys206 is modified (N6-(pyridoxal phosphate)lysine). Thr243 provides a ligand contact to pyridoxal 5'-phosphate. Cys328 acts as the Cysteine persulfide intermediate in catalysis. Cys328 contacts [2Fe-2S] cluster.

The protein belongs to the class-V pyridoxal-phosphate-dependent aminotransferase family. NifS/IscS subfamily. As to quaternary structure, homodimer. Forms a heterotetramer with IscU, interacts with other sulfur acceptors. Pyridoxal 5'-phosphate serves as cofactor.

The protein localises to the cytoplasm. It catalyses the reaction (sulfur carrier)-H + L-cysteine = (sulfur carrier)-SH + L-alanine. Its pathway is cofactor biosynthesis; iron-sulfur cluster biosynthesis. In terms of biological role, master enzyme that delivers sulfur to a number of partners involved in Fe-S cluster assembly, tRNA modification or cofactor biosynthesis. Catalyzes the removal of elemental sulfur atoms from cysteine to produce alanine. Functions as a sulfur delivery protein for Fe-S cluster synthesis onto IscU, an Fe-S scaffold assembly protein, as well as other S acceptor proteins. This chain is Cysteine desulfurase IscS, found in Pseudomonas aeruginosa (strain LESB58).